The primary structure comprises 220 residues: Pro-Pro endopeptidase (220 aa).

An N-terminal signal peptide occupies residues Met1–Ala26. The ATLF-like domain occupies Lys35–Lys220. Interacts with substrate peptide stretches follow at residues Lys101–Trp103 and Gly117–Ser119. His142 lines the Zn(2+) pocket. Residue Glu143 is the Proton acceptor of the active site. The Zn(2+) site is built by His146, Tyr178, and Glu185.

This sequence belongs to the peptidase M34 family. Pro-Pro endopeptidase subfamily. As to quaternary structure, monomer. It depends on Zn(2+) as a cofactor.

The protein localises to the secreted. The catalysed reaction is The enzyme catalyzes the hydrolytic cleavage of peptide bonds between two proline residues.. Is inhibited by the chelating agent o-phenanthroline in vitro. Functionally, zinc-dependent endoprotease with a unique preference for proline residues surrounding the scissile bond. Exhibits a high preference for an asparagine at the P2 position and hydrophobic residues (Val, Ile, Leu) at the P3 position. Efficiently cleaves the LPXTG cell surface proteins CD630_28310 and CD630_32460 at multiple cleavage sites in vivo. Has a role in the regulation of C.difficile adhesion versus motility by cleaving surface adhesion proteins such as the collagen binding protein CD630_28310, and is important for efficient infection. Is also able to cleave fibronectin and fibrinogen in vitro; cleaves at the N-terminus of the beta-chain of fibrinogen. Destabilizes the fibronectin network produced by human fibroblasts. Therefore, may be important in key steps of clostridial pathogenesis by degrading extracellular matrix components associated with the gut epithelial cells. To a lesser extent, IgA1, IgA2, and human HSP 90-beta, but not HSP 90-alpha, are also substrates for the enzyme. Is not active on different collagen types, casein and gelatin. This Clostridioides difficile (strain 630) (Peptoclostridium difficile) protein is Pro-Pro endopeptidase.